A 227-amino-acid polypeptide reads, in one-letter code: 2-C-methyl-D-erythritol 4-phosphate cytidylyltransferase (227 aa).

Belongs to the IspD/TarI cytidylyltransferase family. IspD subfamily.

It carries out the reaction 2-C-methyl-D-erythritol 4-phosphate + CTP + H(+) = 4-CDP-2-C-methyl-D-erythritol + diphosphate. Its pathway is isoprenoid biosynthesis; isopentenyl diphosphate biosynthesis via DXP pathway; isopentenyl diphosphate from 1-deoxy-D-xylulose 5-phosphate: step 2/6. Catalyzes the formation of 4-diphosphocytidyl-2-C-methyl-D-erythritol from CTP and 2-C-methyl-D-erythritol 4-phosphate (MEP). This chain is 2-C-methyl-D-erythritol 4-phosphate cytidylyltransferase, found in Mycobacterium marinum (strain ATCC BAA-535 / M).